Here is a 153-residue protein sequence, read N- to C-terminus: Endoribonuclease YbeY (153 aa).

Zn(2+) contacts are provided by H113, H117, and H123.

It belongs to the endoribonuclease YbeY family. Zn(2+) is required as a cofactor.

It localises to the cytoplasm. Its function is as follows. Single strand-specific metallo-endoribonuclease involved in late-stage 70S ribosome quality control and in maturation of the 3' terminus of the 16S rRNA. The chain is Endoribonuclease YbeY from Aliivibrio fischeri (strain ATCC 700601 / ES114) (Vibrio fischeri).